Here is a 589-residue protein sequence, read N- to C-terminus: Progranulin (589 aa).

Positions 1 to 17 (MWVLMSWLAFAAGLVAG) are cleaved as a signal peptide. The N-linked (GlcNAc...) asparagine glycan is linked to Asn-38. 2 disulfides stabilise this stretch: Cys-125-Cys-138 and Cys-132-Cys-148. The N-linked (GlcNAc...) asparagine glycan is linked to Asn-263. 10 cysteine pairs are disulfide-bonded: Cys-282–Cys-294, Cys-288–Cys-304, Cys-295–Cys-312, Cys-305–Cys-319, Cys-313–Cys-326, Cys-320–Cys-333, Cys-364–Cys-376, Cys-370–Cys-386, Cys-395–Cys-408, and Cys-402–Cys-414. The N-linked (GlcNAc...) asparagine glycan is linked to Asn-373. Residue Asn-526 is glycosylated (N-linked (GlcNAc...) asparagine).

It belongs to the granulin family. In terms of assembly, progranulin is secreted as a homodimer. Interacts with SLPI; interaction protects progranulin from proteolysis. Interacts (via region corresponding to granulin-7 peptide) with CTSD; stabilizes CTSD and increases its proteolytic activity. Interacts (via region corresponding to granulin-7 peptide) with SORT1; this interaction mediates endocytosis and lysosome delivery of progranulin; interaction occurs at the neuronal cell surface in a stressed nervous system. Interacts with PSAP; facilitates lysosomal delivery of progranulin from the extracellular space and the biosynthetic pathway. Forms a complex with PSAP and M6PR; PSAP bridges the binding between progranulin and M6PR. Forms a complex with PSAP and SORT1; progranulin bridges the interaction between PSAP and SORT1; facilitates lysosomal targeting of PSAP via SORT1; interaction enhances PSAP uptake in primary cortical neurons. Interacts (via regions corresponding to granulin-2 and granulin-7 peptides) with GBA1; this interaction prevents aggregation of GBA1-SCARB2 complex via interaction with HSPA1A upon stress. Interacts (via region corresponding to granulin-7 peptide) with HSPA1A; mediates recruitment of HSPA1A to GBA1 and prevents GBA1 aggregation in response to stress. N-glycosylated. In terms of processing, cleaved by ELANE; proteolysis is blocked by SLPI and is concentration- and time-dependent and induces CXCL8/IL-8 production; granulin-3 and granulin-4 are resistant to ELANE. Cleaved by CTSL in lysosome thus regulating the maturation and turnover of progranulin within the lysosome. In terms of tissue distribution, highly expressed at the wound site and diminishes away from the wound. Not expressed in fibroblasts and endothelial cells in intact skin. In adult brain, expressed primarily in neurons and in resting and reactive microglia. Expressed in both neurons and microglia. Highly expressed in activated microglia in response to injury. Expressed in macrophage.

It is found in the secreted. The protein localises to the lysosome. Secreted protein that acts as a key regulator of lysosomal function and as a growth factor involved in inflammation, wound healing and cell proliferation. Regulates protein trafficking to lysosomes, and also the activity of lysosomal enzymes. Also facilitates the acidification of lysosomes, causing degradation of mature CTSD by CTSB. In addition, functions as a wound-related growth factor that acts directly on dermal fibroblasts and endothelial cells to promote division, migration and the formation of capillary-like tubule structures. Also promotes epithelial cell proliferation by blocking TNF-mediated neutrophil activation preventing release of oxidants and proteases. Moreover, modulates inflammation in neurons by preserving neurons survival, axonal outgrowth and neuronal integrity. Functionally, inhibits epithelial cell proliferation and induces epithelial cells to secrete IL-8. In terms of biological role, stabilizes CTSD through interaction with CTSD leading to maintain its aspartic-type peptidase activity. The chain is Progranulin (Grn) from Mus musculus (Mouse).